A 242-amino-acid polypeptide reads, in one-letter code: Prosalusin (242 aa).

Positions 1 to 26 (MAAATRSCRPWGSLLGLIWLVSAAAA) are cleaved as a signal peptide. Residues 27-189 (SWDLSSLRCN…SSWVVYGTNY (163 aa)) constitute a propeptide that is removed on maturation. ATP is bound at residue 93–100 (GWTGTGKS). Asn-149 is a glycosylation site (N-linked (GlcNAc...) asparagine).

Belongs to the ClpA/ClpB family. Torsin subfamily.

The protein resides in the secreted. In terms of biological role, salusin may be a endocrine and/or paracrine factor able to increase intracellular calcium concentrations and induce cell mitogenesis. Salusin may also be a potent hypotensive peptide. This chain is Prosalusin (TOR2A), found in Bos taurus (Bovine).